A 469-amino-acid polypeptide reads, in one-letter code: MASFCASKFLPGLLMLGLGLAVALASSTPTLSLLKDNLKVMNMPLGDWLHILATNFTNFVASQTLLTLTIFGVASFILRYLYQLFLKPLNLDRALGDVGYVLDGKKKRDVVNDIRRRRKSGDLPPIYPNGWIPLVASQDLVKGDVKYISAVGNEFAVYRGEDGEAYAVDAYCPHLGANMAIGGMVKGNCLTCPFHGWVFEGKEGKCVDIPYQEKGKSVPAQAKVKSWSVIEQNGFVLVWHDVEGREPSWFPENIEEEKWGKMYYHGTTKHTVCAHVEEISENGADCAHLTFVHGAFMGSGNDLRYMGSKLWSWASHSWGGKWEQDPDHKHVGVMTVYHAFSLFGMPIEVTRTESTARQNGPAHVLLSFSLPFGKATIAIGVTPIEPLTQIVTQHVYASRFIPRWLAKSFLYAEYVQFERDIMVWNYKTYQRKPLLVFEDRLISKHRRWYSQFFSENSPKFEDMKKTLDW.

The first 25 residues, 1–25 (MASFCASKFLPGLLMLGLGLAVALA), serve as a signal peptide directing secretion. A helical transmembrane segment spans residues 58–78 (NFVASQTLLTLTIFGVASFIL). Residues 132–238 (IPLVASQDLV…VIEQNGFVLV (107 aa)) enclose the Rieske domain. 4 residues coordinate [2Fe-2S] cluster: Cys-172, His-174, Cys-192, and His-195.

It belongs to the cholesterol 7-desaturase family. Requires [2Fe-2S] cluster as cofactor.

Its subcellular location is the membrane. The catalysed reaction is cholesterol + NADPH + O2 + H(+) = 7-dehydrocholesterol + NADP(+) + 2 H2O. It carries out the reaction cholesterol + NADH + O2 + H(+) = 7-dehydrocholesterol + NAD(+) + 2 H2O. The protein operates within steroid hormone biosynthesis; dafachronic acid biosynthesis. In terms of biological role, catalyzes the production of 7-dehydrocholesterol (7-DHC or cholesta-5,7-dien-3beta-ol) by inserting a double bond (desaturating) at the C7-C8 single bond of cholesterol. Essential regulator of steroid biosynthesis as this reaction is the first step in the synthesis of the steroid hormone Delta(7)-dafachronic acid. In Hemicentrotus pulcherrimus (Sea urchin), this protein is Cholesterol 7-desaturase nvd.